The sequence spans 956 residues: Transient receptor potential channel pyrexia (956 aa).

Residues 1–491 lie on the Cytoplasmic side of the membrane; that stretch reads MENVRFSIIE…LFLKWRRIRK (491 aa). ANK repeat units follow at residues 132 to 161, 166 to 195, 198 to 227, 231 to 260, 265 to 294, 298 to 327, 331 to 362, and 366 to 395; these read RGRT…DPNR, KEVT…SINI, EKRS…DPNT, YTET…DVRS, GKVT…EVDC, SHQT…NVNA, DGRT…DVNK, and YGYT…DITA. A helical transmembrane segment spans residues 492 to 512; it reads FFLMSLAYHTLFVILFTFYVI. The Extracellular portion of the chain corresponds to 513–525; that stretch reads WVYVRCCKKEELC. A helical membrane pass occupies residues 526 to 546; sequence VAPGYVSTIGYLVIILNLILL. Over 547-565 the chain is Cytoplasmic; it reads GKEVFQMAHGLRGYAKYWE. The chain crosses the membrane as a helical span at residues 566 to 584; the sequence is NWLQWTIGTGVLLCVTPET. Over 585 to 601 the chain is Extracellular; it reads VRTDDLTAVPVWQHHVA. The helical transmembrane segment at 602–622 threads the bilayer; the sequence is AIVILLVWLELMMLVGRFPIF. Residues 623–638 lie on the Cytoplasmic side of the membrane; that stretch reads GVYVQMFTKVAVNFAK. Residues 639 to 659 form a helical membrane-spanning segment; that stretch reads FLLAYICLLVAFGLSFAVLFN. The Extracellular segment spans residues 660–701; that stretch reads DYPAFENITWSFLKSITMMSGELEFEDIFYGDYAVKFPVTAH. Asn666 carries N-linked (GlcNAc...) asparagine glycosylation. A helical transmembrane segment spans residues 702-722; it reads IIFLSFVLLVTVILTNLMVGL. Over 723–956 the chain is Cytoplasmic; the sequence is AVSDIQGLQV…VASSHIRRHR (234 aa).

It belongs to the transient receptor (TC 1.A.4) family. STrpC subfamily. As to quaternary structure, homooligomer; between isoform A and isoform B. As to expression, expressed in various peripheral nerves and the central nerves in embryos. In adults, it is expressed in sensory neurons lying beneath the bristles around eyes, neurons innervating the bristles on the back of thorax and neurons in maxillary palps, proboscis and antennae. Expressed in multidendritic neurons, which mediate temperature sensing, as well as non-multidendritic neurons in larval epidermis. Localizes ubiquitously throughout neurites.

It is found in the membrane. Receptor-activated non-selective cation channel involved in protection or tolerance from high temperature stress. Activated by temperatures above 40 degrees Celsius. More permeable to K(+) than to Na(+). May act in stress protection allow flies to survive in natural environments. The protein is Transient receptor potential channel pyrexia (pyx) of Drosophila melanogaster (Fruit fly).